A 328-amino-acid chain; its full sequence is MDRDQTNSSLFNDDPVLHATWLYYQEGKSQTEVAAIMGVSRVTVVKYLQTARENGLVHINLDVNVFGSIDAALQIRDKFNLQRVIIVPDGEHAGKRDDTKLMRTRLSRAGGMYLNQVIENGDVLGVAWGRTIHQMSKTMTPKSCKNVTVIQMLGSMPSQPDLTIIESSSQIAYKLSGRVASLHVPAVVSSARLAMELQAEPIIRSNFDVLTRCTKAFFVVGNALDENPLIRVGVLNKKEMQTYRDLGAVGVICGRFYDKEGMPVVADVDQRILGISLAQLRQIERKIFLAGGERGYDATLGALLGGYVTDLIVDEGTAEFLLACELPH.

The segment at residues 72–91 is a DNA-binding region (H-T-H motif); that stretch reads ALQIRDKFNLQRVIIVPDGE.

The protein belongs to the SorC transcriptional regulatory family.

This is an uncharacterized protein from Escherichia coli (strain K12).